The sequence spans 336 residues: Biotin synthase (336 aa).

Positions 54–281 (QAIQLSTLLS…KSYVRLSAGR (228 aa)) constitute a Radical SAM core domain. [4Fe-4S] cluster contacts are provided by Cys-69, Cys-73, and Cys-76. Residues Cys-113, Cys-144, Cys-204, and Arg-276 each contribute to the [2Fe-2S] cluster site.

It belongs to the radical SAM superfamily. Biotin synthase family. In terms of assembly, homodimer. The cofactor is [4Fe-4S] cluster. Requires [2Fe-2S] cluster as cofactor.

The enzyme catalyses (4R,5S)-dethiobiotin + (sulfur carrier)-SH + 2 reduced [2Fe-2S]-[ferredoxin] + 2 S-adenosyl-L-methionine = (sulfur carrier)-H + biotin + 2 5'-deoxyadenosine + 2 L-methionine + 2 oxidized [2Fe-2S]-[ferredoxin]. It functions in the pathway cofactor biosynthesis; biotin biosynthesis; biotin from 7,8-diaminononanoate: step 2/2. Its function is as follows. Catalyzes the conversion of dethiobiotin (DTB) to biotin by the insertion of a sulfur atom into dethiobiotin via a radical-based mechanism. The sequence is that of Biotin synthase from Actinobacillus pleuropneumoniae serotype 7 (strain AP76).